A 414-amino-acid polypeptide reads, in one-letter code: Histidine--tRNA ligase (414 aa).

The protein belongs to the class-II aminoacyl-tRNA synthetase family. As to quaternary structure, homodimer.

The protein resides in the cytoplasm. The enzyme catalyses tRNA(His) + L-histidine + ATP = L-histidyl-tRNA(His) + AMP + diphosphate + H(+). The sequence is that of Histidine--tRNA ligase (hisS) from Mycoplasma genitalium (strain ATCC 33530 / DSM 19775 / NCTC 10195 / G37) (Mycoplasmoides genitalium).